Reading from the N-terminus, the 205-residue chain is Adenylyl-sulfate kinase (205 aa).

Position 31–38 (31–38 (GLSGAGKS)) interacts with ATP. The active-site Phosphoserine intermediate is the serine 105.

It belongs to the APS kinase family.

The enzyme catalyses adenosine 5'-phosphosulfate + ATP = 3'-phosphoadenylyl sulfate + ADP + H(+). It participates in sulfur metabolism; hydrogen sulfide biosynthesis; sulfite from sulfate: step 2/3. Functionally, catalyzes the synthesis of activated sulfate. This Shewanella denitrificans (strain OS217 / ATCC BAA-1090 / DSM 15013) protein is Adenylyl-sulfate kinase.